The primary structure comprises 154 residues: SsrA-binding protein (154 aa).

Basic and acidic residues predominate over residues A123–R142. A disordered region spans residues A123–D154. Residues L143 to D154 are compositionally biased toward basic residues.

The protein belongs to the SmpB family.

The protein localises to the cytoplasm. Required for rescue of stalled ribosomes mediated by trans-translation. Binds to transfer-messenger RNA (tmRNA), required for stable association of tmRNA with ribosomes. tmRNA and SmpB together mimic tRNA shape, replacing the anticodon stem-loop with SmpB. tmRNA is encoded by the ssrA gene; the 2 termini fold to resemble tRNA(Ala) and it encodes a 'tag peptide', a short internal open reading frame. During trans-translation Ala-aminoacylated tmRNA acts like a tRNA, entering the A-site of stalled ribosomes, displacing the stalled mRNA. The ribosome then switches to translate the ORF on the tmRNA; the nascent peptide is terminated with the 'tag peptide' encoded by the tmRNA and targeted for degradation. The ribosome is freed to recommence translation, which seems to be the essential function of trans-translation. This is SsrA-binding protein from Leptothrix cholodnii (strain ATCC 51168 / LMG 8142 / SP-6) (Leptothrix discophora (strain SP-6)).